A 266-amino-acid chain; its full sequence is Putative carbamate hydrolase RutD (266 aa).

Belongs to the AB hydrolase superfamily. Hydrolase RutD family.

It carries out the reaction carbamate + 2 H(+) = NH4(+) + CO2. Involved in pyrimidine catabolism. May facilitate the hydrolysis of carbamate, a reaction that can also occur spontaneously. The chain is Putative carbamate hydrolase RutD from Escherichia coli O7:K1 (strain IAI39 / ExPEC).